We begin with the raw amino-acid sequence, 246 residues long: tRNA (guanine-N(1)-)-methyltransferase (246 aa).

S-adenosyl-L-methionine contacts are provided by residues Gly-112 and 131–136; that span reads IGDYVL.

It belongs to the RNA methyltransferase TrmD family. In terms of assembly, homodimer.

It is found in the cytoplasm. It carries out the reaction guanosine(37) in tRNA + S-adenosyl-L-methionine = N(1)-methylguanosine(37) in tRNA + S-adenosyl-L-homocysteine + H(+). Its function is as follows. Specifically methylates guanosine-37 in various tRNAs. The chain is tRNA (guanine-N(1)-)-methyltransferase from Thermosipho africanus (strain TCF52B).